We begin with the raw amino-acid sequence, 355 residues long: S-adenosylmethionine:tRNA ribosyltransferase-isomerase (355 aa).

Belongs to the QueA family. In terms of assembly, monomer.

The protein localises to the cytoplasm. It carries out the reaction 7-aminomethyl-7-carbaguanosine(34) in tRNA + S-adenosyl-L-methionine = epoxyqueuosine(34) in tRNA + adenine + L-methionine + 2 H(+). The protein operates within tRNA modification; tRNA-queuosine biosynthesis. Transfers and isomerizes the ribose moiety from AdoMet to the 7-aminomethyl group of 7-deazaguanine (preQ1-tRNA) to give epoxyqueuosine (oQ-tRNA). The sequence is that of S-adenosylmethionine:tRNA ribosyltransferase-isomerase from Burkholderia cenocepacia (strain ATCC BAA-245 / DSM 16553 / LMG 16656 / NCTC 13227 / J2315 / CF5610) (Burkholderia cepacia (strain J2315)).